The chain runs to 771 residues: MPSALAIFTCRPNSHPFQERHVYLDEPIKIGRSVARCRPAQNNATFDCKVLSRNHALVWFDHKTGKFYLQDTKSSNGTFINSQRLSRGSEESPPCEILSGDIIQFGVDVTENTRKVTHGCIVSTIKLFLPDGMEARLRSDVIHAPLPSPVDKVAANTPSMYSQELFQLSQYLQEALHREQMLEQKLATLQRLLAITQEASDTSWQALIDEDRLLSRLEVMGNQLQACSKNQTEDSLRKELIALQEDKHNYETTAKESLRRVLQEKIEVVRKLSEVERSLSNTEDECTHLKEMNERTQEELRELANKYNGAVNEIKDLSDKLKVAEGKQEEIQQKGQAEKKELQHKIDEMEEKEQELQAKIEALQADNDFTNERLTALQEHLLSKSGGDCTFIHQFIECQKKLIVEGHLTKVVEETKLAKENQARAKESDLSDTLSPSKEKSSDDTTDAQMDEQDLNESLAKVSLLKALLEEERKAYRNQVEESSKQIQVLQAQLQRLHMDIENLREEKDNEITSTRDELLSARDEILLLHQAAEKAASERDTDIASLQEELKKVRAELERWRKAASEYEKEVTSLQSSFQLRCQQCEDQQKEEATRLQGELEKLRKEWNVLETECHSLKKENVLLSSELQRQEKELHNSQKQSLELTSDLSILQMTRKELENQMGSLKEQHLRDSADLKILLSKAENQAKDVQKEYEKTQTVLSELKLKFEMTEQEKQSITDELKQCKDNLKLLQEKGNNNKPWPWMPMLAALVAVTAIVLYVPGLARASP.

The interval 1 to 163 (MPSALAIFTC…AANTPSMYSQ (163 aa)) is necessary for targeting to centrosomes. Topologically, residues 1–745 (MPSALAIFTC…EKGNNNKPWP (745 aa)) are cytoplasmic. The region spanning 28–85 (IKIGRSVARCRPAQNNATFDCKVLSRNHALVWFDHKTGKFYLQDTKSSNGTFINSQRL) is the FHA domain. S148 is subject to Phosphoserine. Coiled coils occupy residues 167 to 202 (QLSQ…ASDT) and 230 to 381 (NQTE…QEHL). Positions 420-429 (ENQARAKESD) are enriched in basic and acidic residues. The segment at 420–450 (ENQARAKESDLSDTLSPSKEKSSDDTTDAQM) is disordered. S431 and S435 each carry phosphoserine. The stretch at 452-742 (EQDLNESLAK…LLQEKGNNNK (291 aa)) forms a coiled coil. Residues 746-766 (WMPMLAALVAVTAIVLYVPGL) form a helical; Anchor for type IV membrane protein membrane-spanning segment. Residues 767-771 (ARASP) lie on the Extracellular side of the membrane.

It belongs to the SLMAP family. In terms of assembly, homodimer. Interacts with myosin. Interacts with SIKE1 and both associate with the STRIPAK core complex composed of PP2A catalytic and scaffolding subunits, the striatins (PP2A regulatory subunits), the striatin-associated proteins MOB4, STRIP1 and STRIP2, PDCD10 and members of the STE20 kinases, such as STK24 and STK26. Interacts (via FHA domain) with STK3 (when phosphorylated); the interaction associates STK3 with the STRIPAK complex. As to expression, expressed in heart (at protein level). Expressed in heart, skeletal muscle, smooth muscle, kidney, spleen, pancreas and brain.

Its subcellular location is the cell membrane. It is found in the sarcolemma. The protein resides in the cytoplasm. The protein localises to the myofibril. It localises to the sarcomere. Its subcellular location is the m line. It is found in the z line. The protein resides in the cytoskeleton. The protein localises to the microtubule organizing center. It localises to the centrosome. Its subcellular location is the endoplasmic reticulum membrane. It is found in the mitochondrion membrane. In terms of biological role, associates with the striatin-interacting phosphatase and kinase (STRIPAK) core complex, forming the extended (SIKE1:SLMAP)STRIPAK complex. The (SIKE1:SLMAP)STRIPAK complex dephosphorylates STK3 leading to the inhibition of Hippo signaling and the control of cell growth. May play a role during myoblast fusion. This is Sarcolemmal membrane-associated protein (SLMAP) from Oryctolagus cuniculus (Rabbit).